A 179-amino-acid chain; its full sequence is ATP-dependent protease subunit HslV (179 aa).

The active site involves Thr7. Gly162, Cys165, and Thr168 together coordinate Na(+).

Belongs to the peptidase T1B family. HslV subfamily. In terms of assembly, a double ring-shaped homohexamer of HslV is capped on each side by a ring-shaped HslU homohexamer. The assembly of the HslU/HslV complex is dependent on binding of ATP.

Its subcellular location is the cytoplasm. The enzyme catalyses ATP-dependent cleavage of peptide bonds with broad specificity.. Allosterically activated by HslU binding. Protease subunit of a proteasome-like degradation complex believed to be a general protein degrading machinery. The sequence is that of ATP-dependent protease subunit HslV from Aromatoleum aromaticum (strain DSM 19018 / LMG 30748 / EbN1) (Azoarcus sp. (strain EbN1)).